A 266-amino-acid chain; its full sequence is 22 kDa alpha-zein 14 (266 aa).

The signal sequence occupies residues 1–21 (MATKILSLLALLALFASATNA).

This sequence belongs to the zein family.

Its function is as follows. Zeins are major seed storage proteins. This Zea mays (Maize) protein is 22 kDa alpha-zein 14.